The primary structure comprises 300 residues: Phospholipase A1 (300 aa).

Cys4 and Cys87 form a disulfide bridge. Residue Ser137 is the Nucleophile of the active site. Catalysis depends on Asp165, which acts as the Charge relay system. 2 disulfides stabilise this stretch: Cys176–Cys181 and Cys218–Cys227. The Charge relay system role is filled by His229. 3 disulfide bridges follow: Cys244–Cys268, Cys245–Cys293, and Cys261–Cys266.

This sequence belongs to the AB hydrolase superfamily. Lipase family. In terms of tissue distribution, expressed by the venom gland.

It localises to the secreted. The enzyme catalyses a 1,2-diacyl-sn-glycero-3-phosphocholine + H2O = a 2-acyl-sn-glycero-3-phosphocholine + a fatty acid + H(+). Its activity is regulated as follows. Local inflammatory effects are inhibited by antiserotonin drugs (cyproheptadine and methysergide), indomethacin, betamethasone, and antihistamine (chlorpheniramine). Its function is as follows. Catalyzes the hydrolysis of phosphatidylcholine with phospholipase A1 activity. Shows potent hemolytic activity that is responsible for its lethal effect. May act as an allergen. In vivo, induces local inflammatory effects. The protein is Phospholipase A1 of Vespa basalis (Hornet).